Reading from the N-terminus, the 260-residue chain is Glutamate racemase (260 aa).

Residues 14 to 15 (DS) and 46 to 47 (YG) contribute to the substrate site. Catalysis depends on cysteine 77, which acts as the Proton donor/acceptor. Substrate is bound at residue 78–79 (NT). The Proton donor/acceptor role is filled by cysteine 188. A substrate-binding site is contributed by 189 to 190 (TH).

It belongs to the aspartate/glutamate racemases family.

It carries out the reaction L-glutamate = D-glutamate. The protein operates within cell wall biogenesis; peptidoglycan biosynthesis. Its function is as follows. Provides the (R)-glutamate required for cell wall biosynthesis. The polypeptide is Glutamate racemase (Clostridium perfringens (strain SM101 / Type A)).